Reading from the N-terminus, the 702-residue chain is Polyribonucleotide nucleotidyltransferase (702 aa).

D485 and D491 together coordinate Mg(2+). The KH domain occupies P552–I612. In terms of domain architecture, S1 motif spans G622–K690.

It belongs to the polyribonucleotide nucleotidyltransferase family. The cofactor is Mg(2+).

It is found in the cytoplasm. The catalysed reaction is RNA(n+1) + phosphate = RNA(n) + a ribonucleoside 5'-diphosphate. Involved in mRNA degradation. Catalyzes the phosphorolysis of single-stranded polyribonucleotides processively in the 3'- to 5'-direction. The protein is Polyribonucleotide nucleotidyltransferase of Clostridium botulinum (strain Kyoto / Type A2).